The sequence spans 311 residues: Mitochondrial ribosome-associated GTPase 1 (311 aa).

Residues 27 to 200 (AKGLKQMKTK…LFDTPGVLSP (174 aa)) form the CP-type G domain. GTP is bound by residues 74–77 (NKMD), 144–149 (NVGKSS), and Gly196.

It belongs to the TRAFAC class YlqF/YawG GTPase family. MTG1 subfamily.

The protein localises to the mitochondrion inner membrane. In terms of biological role, plays a role in the regulation of the mitochondrial ribosome assembly and of translational activity. Displays mitochondrial GTPase activity. The protein is Mitochondrial ribosome-associated GTPase 1 of Xenopus tropicalis (Western clawed frog).